Reading from the N-terminus, the 336-residue chain is Probable G-protein coupled receptor 160 (336 aa).

Residues 1 to 20 lie on the Extracellular side of the membrane; sequence MTALSSKNCSLQYQLHQSPQ. An N-linked (GlcNAc...) asparagine glycan is attached at N8. Residues 21–41 form a helical membrane-spanning segment; sequence LLEASCLLFLIILGKVLLNIL. Topologically, residues 42 to 56 are cytoplasmic; it reads LLRVRRGDARWTLME. The chain crosses the membrane as a helical span at residues 57-77; sequence YFCFSLALVDLLLLVNISILT. The Extracellular segment spans residues 78 to 95; that stretch reads YFRDFVVLGIRFTRYHIC. Residues 96–116 form a helical membrane-spanning segment; sequence LLTQIISFTYGFLHYPVCSLA. Residues 117–136 lie on the Cytoplasmic side of the membrane; that stretch reads CIDYWCNLSRASKQSSRWQK. A helical membrane pass occupies residues 137-157; the sequence is LLYFLTVILTWISVLAYVLVD. The Extracellular segment spans residues 158–186; sequence PAISVSLKAHRGYVYQCPAYVSTQSHWLS. Residues 187 to 207 traverse the membrane as a helical segment; the sequence is LSMLMVLFVAFLISWQEVVAL. The Cytoplasmic portion of the chain corresponds to 208–243; that stretch reads LQAMRIASYKSKAALYFPFPLHCGYALSCREALLPR. Residues 244–264 form a helical membrane-spanning segment; it reads LIVCFLGTWFPFVALQVLILS. Over 265-272 the chain is Extracellular; that stretch reads LRVQIPAY. A helical transmembrane segment spans residues 273 to 293; that stretch reads IEMNVPWLYFVNSFLIAAVYW. The Cytoplasmic segment spans residues 294–336; it reads FNCHKLDLRDSSLPVDPFINWKCCFVPVHRLKQVERPMSIVIC.

Belongs to the G-protein coupled receptor 1 family.

It is found in the cell membrane. Orphan receptor. The protein is Probable G-protein coupled receptor 160 (Gpr160) of Mus musculus (Mouse).